Consider the following 85-residue polypeptide: Transcriptional repressor protein KorC (85 aa).

A DNA-binding region (H-T-H motif) is located at residues V28–A47.

Acts with KorA as corepressor in the control of the kilC and kilE operons. In Escherichia coli, this protein is Transcriptional repressor protein KorC (korC).